The chain runs to 899 residues: UPF0182 protein Mhun_1303 (899 aa).

7 helical membrane passes run 6–26 (LLIF…DLLS), 39–59 (VFLT…LLFF), 93–113 (VAAG…LAFL), 136–156 (LPFY…TLII), 196–216 (FLPQ…AFLW), 240–260 (ITIP…LLFL), and 271–291 (IAYG…AGFL).

It belongs to the UPF0182 family.

It localises to the cell membrane. The polypeptide is UPF0182 protein Mhun_1303 (Methanospirillum hungatei JF-1 (strain ATCC 27890 / DSM 864 / NBRC 100397 / JF-1)).